The sequence spans 967 residues: Sodium/potassium exporting P-type ATPase 1 (967 aa).

The Cytoplasmic portion of the chain corresponds to Met-1–Arg-70. A helical membrane pass occupies residues Gln-71 to Lys-91. A topological domain (extracellular) is located at residue Asp-92. A helical transmembrane segment spans residues Tyr-93 to Gln-113. Residues Glu-114–Leu-254 lie on the Cytoplasmic side of the membrane. A helical transmembrane segment spans residues Asn-255–Val-275. Residues Asn-276–Glu-283 are Extracellular-facing. N-linked (GlcNAc...) asparagine glycosylation is present at Asn-279. The chain crosses the membrane as a helical span at residues Val-284–Ile-304. At Thr-305–Lys-732 the chain is on the cytoplasmic side. The active-site 4-aspartylphosphate intermediate is the Asp-340. Positions 340 and 342 each coordinate Mg(2+). Residues Thr-342, Glu-425, Lys-478, Arg-523, Thr-587, Gly-588, Asp-589, Arg-651, and Lys-657 each contribute to the ATP site. Position 676 (Asp-676) interacts with Mg(2+). Asn-679 contributes to the ATP binding site. The chain crosses the membrane as a helical span at residues Phe-733–Ala-753. Over Phe-754–Asp-812 the chain is Extracellular. Residues Ile-813–Tyr-833 form a helical membrane-spanning segment. The Cytoplasmic segment spans residues Pro-834–Lys-900. The helical transmembrane segment at Val-901–Thr-921 threads the bilayer. Over Leu-922–Gly-931 the chain is Extracellular. The helical transmembrane segment at Ile-932–Phe-952 threads the bilayer. Topologically, residues Tyr-953–Met-967 are cytoplasmic.

The protein belongs to the cation transport ATPase (P-type) (TC 3.A.3) family. Type IID subfamily. Mg(2+) serves as cofactor. The active site is phosphorylated in presence of sodium or potassium and in conditions of higher pH. Not phosphorylated in presence of calcium ions.

Its subcellular location is the cell membrane. The catalysed reaction is Na(+)(in) + ATP + H2O = Na(+)(out) + ADP + phosphate + H(+). It carries out the reaction K(+)(in) + ATP + H2O = K(+)(out) + ADP + phosphate + H(+). Catalyzes the hydrolysis of ATP coupled with the export of sodium and potassium from the cell. May pump potassium inefficiently. May transport other cations such as lithium. Sodium/potassium efflux ATPases are involved in salt tolerance and maintaining the membrane potential across the plasma membrane in high salinity (Na+) or alkaline (K+) environments. This chain is Sodium/potassium exporting P-type ATPase 1, found in Physcomitrium patens (Spreading-leaved earth moss).